A 58-amino-acid chain; its full sequence is Metallothionein (58 aa).

Residues 1–29 (MPGPCCNDVCECAAGGCKTGCVCTSCRCS) form a beta region. Positions 5, 6, 10, 12, 17, 21, 23, 26, 28, 31, 34, 38, 40, 46, 50, 54, 56, and 57 each coordinate a divalent metal cation. The segment at 30-58 (PCDKCTSGCKCPSKEECAKTCSKPCECCP) is alpha.

Functionally, metallothioneins have a high content of cysteine residues that bind various heavy metals. Class I MTS in crustacea are involved in the sequestration of elevated levels of heavy-metal ions. This chain is Metallothionein, found in Astacus astacus (Noble crayfish).